The sequence spans 330 residues: Ketol-acid reductoisomerase (NADP(+)) (330 aa).

Positions 1 to 181 constitute a KARI N-terminal Rossmann domain; it reads MKVYYEQDAT…GGARSGVIET (181 aa). NADP(+) contacts are provided by residues 24–27, R47, and 82–85; these read YGSQ and DQVQ. The active site involves H107. G133 is a binding site for NADP(+). The 146-residue stretch at 182-327 folds into the KARI C-terminal knotted domain; sequence TFKEETETDL…GKLRGMMPWL (146 aa). Residues D190, E194, E226, and E230 each coordinate Mg(2+). A substrate-binding site is contributed by S251.

Belongs to the ketol-acid reductoisomerase family. Requires Mg(2+) as cofactor.

The catalysed reaction is (2R)-2,3-dihydroxy-3-methylbutanoate + NADP(+) = (2S)-2-acetolactate + NADPH + H(+). The enzyme catalyses (2R,3R)-2,3-dihydroxy-3-methylpentanoate + NADP(+) = (S)-2-ethyl-2-hydroxy-3-oxobutanoate + NADPH + H(+). It functions in the pathway amino-acid biosynthesis; L-isoleucine biosynthesis; L-isoleucine from 2-oxobutanoate: step 2/4. It participates in amino-acid biosynthesis; L-valine biosynthesis; L-valine from pyruvate: step 2/4. Functionally, involved in the biosynthesis of branched-chain amino acids (BCAA). Catalyzes an alkyl-migration followed by a ketol-acid reduction of (S)-2-acetolactate (S2AL) to yield (R)-2,3-dihydroxy-isovalerate. In the isomerase reaction, S2AL is rearranged via a Mg-dependent methyl migration to produce 3-hydroxy-3-methyl-2-ketobutyrate (HMKB). In the reductase reaction, this 2-ketoacid undergoes a metal-dependent reduction by NADPH to yield (R)-2,3-dihydroxy-isovalerate. This is Ketol-acid reductoisomerase (NADP(+)) from Nitratidesulfovibrio vulgaris (strain DSM 19637 / Miyazaki F) (Desulfovibrio vulgaris).